The primary structure comprises 116 residues: Large ribosomal subunit protein bL17 (116 aa).

Belongs to the bacterial ribosomal protein bL17 family. As to quaternary structure, part of the 50S ribosomal subunit. Contacts protein L32.

This is Large ribosomal subunit protein bL17 from Synechococcus sp. (strain CC9311).